Here is a 338-residue protein sequence, read N- to C-terminus: Aspartate--ammonia ligase (338 aa).

This sequence belongs to the class-II aminoacyl-tRNA synthetase family. AsnA subfamily.

It localises to the cytoplasm. The enzyme catalyses L-aspartate + NH4(+) + ATP = L-asparagine + AMP + diphosphate + H(+). It participates in amino-acid biosynthesis; L-asparagine biosynthesis; L-asparagine from L-aspartate (ammonia route): step 1/1. The protein is Aspartate--ammonia ligase of Lactobacillus delbrueckii subsp. bulgaricus (strain ATCC BAA-365 / Lb-18).